The primary structure comprises 217 residues: Large ribosomal subunit protein uL3 (217 aa).

The interval 127 to 162 is disordered; it reads GFSRGPMSHGSKNHRAPGSTGAGTTPGRIYPGKRMA. Low complexity predominate over residues 142–153; sequence APGSTGAGTTPG.

It belongs to the universal ribosomal protein uL3 family. Part of the 50S ribosomal subunit. Forms a cluster with proteins L14 and L19.

Its function is as follows. One of the primary rRNA binding proteins, it binds directly near the 3'-end of the 23S rRNA, where it nucleates assembly of the 50S subunit. The protein is Large ribosomal subunit protein uL3 of Prochlorococcus marinus (strain MIT 9312).